The primary structure comprises 344 residues: Flavonoid 7-O-methyltransferase 1B (344 aa).

Asp211 contacts S-adenosyl-L-methionine. The Proton acceptor role is filled by His249.

Belongs to the class I-like SAM-binding methyltransferase superfamily. Cation-independent O-methyltransferase family. In terms of assembly, homodimer.

The enzyme catalyses scutellarein + S-adenosyl-L-methionine = scutellarein 7-methyl ether + S-adenosyl-L-homocysteine. It catalyses the reaction 4',7,8-trihydroxyflavone + S-adenosyl-L-methionine = 4',8-dihydroxy-7-methoxyflavone + S-adenosyl-L-homocysteine. It carries out the reaction isorhamnetin + S-adenosyl-L-methionine = rhamnacene + S-adenosyl-L-homocysteine + H(+). The catalysed reaction is kaempferol + S-adenosyl-L-methionine = kaempferol 7-methyl ether + S-adenosyl-L-homocysteine + H(+). The enzyme catalyses (2S)-naringenin + S-adenosyl-L-methionine = (2S)-sakuranetin + S-adenosyl-L-homocysteine + H(+). It catalyses the reaction quercetin + S-adenosyl-L-methionine = rhamnetin + S-adenosyl-L-homocysteine + H(+). It carries out the reaction apigenin + S-adenosyl-L-methionine = genkwanin + S-adenosyl-L-homocysteine + H(+). The catalysed reaction is luteolin + S-adenosyl-L-methionine = luteolin 7-methyl ether + S-adenosyl-L-homocysteine + H(+). It participates in flavonoid metabolism. Its function is as follows. Flavonoid 7-O-methyltransferase involved in the biosynthesis of polymethoxylated flavonoids natural products such as pebrellin, aroma compounds which contribute to the flavor of peppermint, and exhibit pharmacological activities such as anti-allergic, anti-oxidant, antibacterial, anti-proliferative, and anti-inflammatory effects. Catalyzes S-adenosylmethionine-dependent regioselective 7-O-methylation of flavonoids; active on various hydroxylated flavonoid substrates, including luteolin (LUT), quercetin, kaempferol, isorhamnetin, apigenin (API), scutellarein (6-hydroxy-apigenin, 6-OH-API, SCU), 7,8,4'-trihydroxy-flavone and naringenin (NAR), and, with a lower efficiency, 7,8,3',4'-tetrahydroxy-flavone, taxifolin and hesperetin. The protein is Flavonoid 7-O-methyltransferase 1B of Mentha piperita (Peppermint).